The following is a 120-amino-acid chain: MTIRAYVGLGSNLDSPAEQLRSAFQALDQVEATRLVAASALYTSDSLLPGQPXYTNAVAALDTALAPLALLDALQAIENDQGXVRKERWGPRTLDLDILLFSDQVLDQPRLKVPHYHMHA.

The protein belongs to the HPPK family.

It catalyses the reaction 6-hydroxymethyl-7,8-dihydropterin + ATP = (7,8-dihydropterin-6-yl)methyl diphosphate + AMP + H(+). It functions in the pathway cofactor biosynthesis; tetrahydrofolate biosynthesis; 2-amino-4-hydroxy-6-hydroxymethyl-7,8-dihydropteridine diphosphate from 7,8-dihydroneopterin triphosphate: step 4/4. Catalyzes the transfer of pyrophosphate from adenosine triphosphate (ATP) to 6-hydroxymethyl-7,8-dihydropterin, an enzymatic step in folate biosynthesis pathway. This Pseudomonas putida (Arthrobacter siderocapsulatus) protein is 2-amino-4-hydroxy-6-hydroxymethyldihydropteridine pyrophosphokinase (folK).